Here is a 624-residue protein sequence, read N- to C-terminus: MAKQEQRFDYVKIALASPERIRQWGERTLPNGQVVGEVTKPETINYRTLKPEMDGLFCEKIFGPAKDWECHCGKYKRVQHRGIVCERCGVEVTEPRVRRHRMGFIKLAAPVAHVWYLKGIPSYIAILLDMPLRDVEQIVYFNSYVVLNPDNHSELQYKQLLNEDQWMEIEDQIYAEESDLEGIEVGIGAEALQQLLQDLNLNEESEKLRQEIAESKGQKRAKLIKRLRVIDNFIGTESRPEWMVLNVIPVIPPDLRPMVQLDGGRFATSDLNDLYRRVINRNNRLARLQEILAPEIIVRNEKRMLQEAVDALIDNGRRGRTVVGANNRPLKSLSDIIEGKQGRFRQNLLGKRVDYSGRSVIVVGPNLKIHQCGLPREMAIELFQPFVIHRLIKNHSINNIKQAKKLIQKNDPLIWDVLEEVIEGHPVMLNRAPTLHRLGIQAFEPILVEGRAIQLHPLVCPAFNADFDGDQMAVHVPLSIEAQAEARMLMLASGNILSPATGQPIVTPSQDMVLGCYYLTAENPGAQKGAGRYFANLEDAIRAFEQGSVDLHAWVWVRFDGEVESEGESDEPESVVAADDGTVTKTYRFRRIRETEDGQRLSQYVKTAPGRILFNNTVQTALIH.

Residues C70, C72, C85, and C88 each coordinate Zn(2+). The Mg(2+) site is built by D466, D468, and D470.

This sequence belongs to the RNA polymerase beta' chain family. RpoC1 subfamily. In terms of assembly, in cyanobacteria the RNAP catalytic core is composed of 2 alpha, 1 beta, 1 beta', 1 gamma and 1 omega subunit. When a sigma factor is associated with the core the holoenzyme is formed, which can initiate transcription. Requires Mg(2+) as cofactor. Zn(2+) is required as a cofactor.

The catalysed reaction is RNA(n) + a ribonucleoside 5'-triphosphate = RNA(n+1) + diphosphate. In terms of biological role, DNA-dependent RNA polymerase catalyzes the transcription of DNA into RNA using the four ribonucleoside triphosphates as substrates. The sequence is that of DNA-directed RNA polymerase subunit gamma from Synechococcus sp. (strain ATCC 27144 / PCC 6301 / SAUG 1402/1) (Anacystis nidulans).